A 153-amino-acid polypeptide reads, in one-letter code: 6,7-dimethyl-8-ribityllumazine synthase (153 aa).

5-amino-6-(D-ribitylamino)uracil is bound by residues Phe-22, 56–58, and 80–82; these read AFE and TVI. 85-86 contributes to the (2S)-2-hydroxy-3-oxobutyl phosphate binding site; sequence AT. His-88 serves as the catalytic Proton donor. Position 113 (Phe-113) interacts with 5-amino-6-(D-ribitylamino)uracil. Arg-127 contacts (2S)-2-hydroxy-3-oxobutyl phosphate.

Belongs to the DMRL synthase family.

It carries out the reaction (2S)-2-hydroxy-3-oxobutyl phosphate + 5-amino-6-(D-ribitylamino)uracil = 6,7-dimethyl-8-(1-D-ribityl)lumazine + phosphate + 2 H2O + H(+). Its pathway is cofactor biosynthesis; riboflavin biosynthesis; riboflavin from 2-hydroxy-3-oxobutyl phosphate and 5-amino-6-(D-ribitylamino)uracil: step 1/2. Its function is as follows. Catalyzes the formation of 6,7-dimethyl-8-ribityllumazine by condensation of 5-amino-6-(D-ribitylamino)uracil with 3,4-dihydroxy-2-butanone 4-phosphate. This is the penultimate step in the biosynthesis of riboflavin. The polypeptide is 6,7-dimethyl-8-ribityllumazine synthase (Clostridium perfringens (strain 13 / Type A)).